Consider the following 869-residue polypeptide: Leucine--tRNA ligase (869 aa).

The short motif at 42 to 52 (PYPSGKLHMGH) is the 'HIGH' region element. The 'KMSKS' region motif lies at 624-628 (TMSKS). Lys-627 is an ATP binding site.

The protein belongs to the class-I aminoacyl-tRNA synthetase family.

The protein resides in the cytoplasm. It catalyses the reaction tRNA(Leu) + L-leucine + ATP = L-leucyl-tRNA(Leu) + AMP + diphosphate. This Nitrosomonas europaea (strain ATCC 19718 / CIP 103999 / KCTC 2705 / NBRC 14298) protein is Leucine--tRNA ligase.